The sequence spans 219 residues: Flagellin B4 (219 aa).

The propeptide occupies 1–5 (MHRKG).

Belongs to the archaeal flagellin family.

The protein localises to the archaeal flagellum. Flagellin is the subunit protein which polymerizes to form the filaments of archaeal flagella. The protein is Flagellin B4 (flaB4) of Pyrococcus abyssi (strain GE5 / Orsay).